Here is a 349-residue protein sequence, read N- to C-terminus: MAGKKVCIVGSGDWGSAIAKIVGGNAAQLAQFDPRVTMWVFEEDIGGKKLTEIINTHQENVKYLPGHKLPPNVVAVPDVVKAAADADILIFVVPHQFIGKICDEIKGHLKANAIGISLIKGVNEGPKGLKLISEVIGEHLGIPMSVLMGANIASEVADEKFCETTIGCKDQAQGQLLKQLMQTPNFRIVVTQEVNTVEICGALKDLVAVGAGFCDGIGFGDNTKAAVIRLGLMEMIAFAKLFCSGPVSPATFLESCGVADLITTCYGGRNRKVAEAFARTGKSIEQLEKEMLNGQKLQGPETARELHSILQHKGLVDWFPLFMAVYKVCYQGQPVGEFIRCLQNHPEHM.

NAD(+) contacts are provided by residues 10–15 (GSGDWG), Lys120, and Ala153. Residue Lys120 coordinates substrate. A Phosphoserine modification is found at Ser154. Lys204 (proton acceptor) is an active-site residue. Arg269 lines the NAD(+) pocket. 269–270 (RN) lines the substrate pocket. Position 289 is an N6-succinyllysine (Lys289). The NAD(+) site is built by Lys296 and Gln298. Phosphotyrosine is present on Tyr326.

This sequence belongs to the NAD-dependent glycerol-3-phosphate dehydrogenase family. As to quaternary structure, homodimer.

It is found in the cytoplasm. The catalysed reaction is sn-glycerol 3-phosphate + NAD(+) = dihydroxyacetone phosphate + NADH + H(+). Functionally, has glycerol-3-phosphate dehydrogenase activity. The protein is Glycerol-3-phosphate dehydrogenase [NAD(+)], cytoplasmic (GPD1) of Oryctolagus cuniculus (Rabbit).